A 485-amino-acid chain; its full sequence is Protein hunchback (485 aa).

Residues Thr-1 to Lys-77 form a disordered region. The span at Gln-16–Asp-37 shows a compositional bias: polar residues. Residues Ala-59–Asp-72 are compositionally biased toward acidic residues. C2H2-type zinc fingers lie at residues Tyr-87–His-109, Leu-116–His-138, Phe-144–His-166, and Tyr-172–His-196. Disordered stretches follow at residues Lys-229 to Ser-270, Asn-318 to His-361, and Pro-398 to Ser-422. Residues Asn-257–Ser-270 are compositionally biased toward polar residues. Residues Asn-325–Glu-335 show a composition bias toward acidic residues. Positions Asp-345–Gln-358 are enriched in polar residues. Positions Gln-402–Thr-416 are enriched in low complexity. C2H2-type zinc fingers lie at residues Tyr-432–His-454 and Phe-460–His-484.

Belongs to the hunchback C2H2-type zinc-finger protein family.

The protein resides in the nucleus. Gap class segmentation protein that controls development of head structures. This is Protein hunchback (hb) from Clogmia albipunctata (Mothmidge).